The following is a 93-amino-acid chain: Cobalt transport protein CbiN (93 aa).

A run of 2 helical transmembrane segments spans residues 5 to 25 (LMLLAMVVALVILPFFINHGG) and 63 to 83 (LLFTLQGSLGAAVIFYILGYC).

This sequence belongs to the CbiN family. Forms an energy-coupling factor (ECF) transporter complex composed of an ATP-binding protein (A component, CbiO), a transmembrane protein (T component, CbiQ) and 2 possible substrate-capture proteins (S components, CbiM and CbiN) of unknown stoichimetry.

Its subcellular location is the cell inner membrane. The protein operates within cofactor biosynthesis; adenosylcobalamin biosynthesis. In terms of biological role, part of the energy-coupling factor (ECF) transporter complex CbiMNOQ involved in cobalt import. This chain is Cobalt transport protein CbiN, found in Salmonella gallinarum (strain 287/91 / NCTC 13346).